A 251-amino-acid polypeptide reads, in one-letter code: ATP synthase subunit a (251 aa).

A run of 5 helical transmembrane segments spans residues V34–S54, F93–F113, I130–S150, L195–L215, and G216–G236.

It belongs to the ATPase A chain family. F-type ATPases have 2 components, CF(1) - the catalytic core - and CF(0) - the membrane proton channel. CF(1) has five subunits: alpha(3), beta(3), gamma(1), delta(1), epsilon(1). CF(0) has four main subunits: a, b, b' and c.

The protein resides in the cellular thylakoid membrane. In terms of biological role, key component of the proton channel; it plays a direct role in the translocation of protons across the membrane. In Nostoc sp. (strain PCC 7120 / SAG 25.82 / UTEX 2576), this protein is ATP synthase subunit a.